The primary structure comprises 780 residues: 5-methyltetrahydropteroyltriglutamate--homocysteine methyltransferase (780 aa).

Residues 15–18 and K114 contribute to the 5-methyltetrahydropteroyltri-L-glutamate site; that span reads RELK. Residues 457–459 and E510 each bind L-homocysteine; that span reads IGS. L-methionine-binding positions include 457–459 and E510; that span reads IGS. Residues 541 to 542 and W587 contribute to the 5-methyltetrahydropteroyltri-L-glutamate site; that span reads RC. D625 contributes to the L-homocysteine binding site. Residue D625 coordinates L-methionine. Residue E631 coordinates 5-methyltetrahydropteroyltri-L-glutamate. Zn(2+) contacts are provided by H667, C669, and E691. The Proton donor role is filled by H720. C752 lines the Zn(2+) pocket.

The protein belongs to the vitamin-B12 independent methionine synthase family. The cofactor is Zn(2+).

It catalyses the reaction 5-methyltetrahydropteroyltri-L-glutamate + L-homocysteine = tetrahydropteroyltri-L-glutamate + L-methionine. Its pathway is amino-acid biosynthesis; L-methionine biosynthesis via de novo pathway; L-methionine from L-homocysteine (MetE route): step 1/1. Its function is as follows. Catalyzes the transfer of a methyl group from 5-methyltetrahydrofolate to homocysteine resulting in methionine formation. In Nitratidesulfovibrio vulgaris (strain DSM 19637 / Miyazaki F) (Desulfovibrio vulgaris), this protein is 5-methyltetrahydropteroyltriglutamate--homocysteine methyltransferase.